A 618-amino-acid chain; its full sequence is UvrABC system protein C (618 aa).

One can recognise a GIY-YIG domain in the interval 15 to 93; it reads RTPGVYLMKD…IKEHHPRYNI (79 aa). In terms of domain architecture, UVR spans 203 to 238; sequence NNLLRELRERMKMAAEQMNYEEAAFLRDRIRAIEET.

Belongs to the UvrC family. Interacts with UvrB in an incision complex.

Its subcellular location is the cytoplasm. In terms of biological role, the UvrABC repair system catalyzes the recognition and processing of DNA lesions. UvrC both incises the 5' and 3' sides of the lesion. The N-terminal half is responsible for the 3' incision and the C-terminal half is responsible for the 5' incision. This Syntrophus aciditrophicus (strain SB) protein is UvrABC system protein C.